A 309-amino-acid chain; its full sequence is UPF0282 protein Saci_0277 (309 aa).

It belongs to the UPF0282 family.

The sequence is that of UPF0282 protein Saci_0277 from Sulfolobus acidocaldarius (strain ATCC 33909 / DSM 639 / JCM 8929 / NBRC 15157 / NCIMB 11770).